A 100-amino-acid polypeptide reads, in one-letter code: NADH-quinone oxidoreductase subunit K (100 aa).

A run of 3 helical transmembrane segments spans residues 4–24, 28–48, and 60–80; these read TTWV…GLLS, LLFI…LFIA, and IMYL…LALV.

Belongs to the complex I subunit 4L family. NDH-1 is composed of 13 different subunits. Subunits NuoA, H, J, K, L, M, N constitute the membrane sector of the complex.

Its subcellular location is the cell inner membrane. It catalyses the reaction a quinone + NADH + 5 H(+)(in) = a quinol + NAD(+) + 4 H(+)(out). In terms of biological role, NDH-1 shuttles electrons from NADH, via FMN and iron-sulfur (Fe-S) centers, to quinones in the respiratory chain. The immediate electron acceptor for the enzyme in this species is believed to be ubiquinone. Couples the redox reaction to proton translocation (for every two electrons transferred, four hydrogen ions are translocated across the cytoplasmic membrane), and thus conserves the redox energy in a proton gradient. The polypeptide is NADH-quinone oxidoreductase subunit K (Shewanella woodyi (strain ATCC 51908 / MS32)).